A 1914-amino-acid polypeptide reads, in one-letter code: MTPSPFLDAVDAGLSRLYACFGGQGPSNWAGLDELVHLSHAYADCAPIQDLLDSSARRLESLAAIPHRSSFFAGRGFQLQAWLNDAAASAPLPEDLALSPYSFPINTLLSLLHYAITAYSLQLDPGQLRQKLQGAIGHSQGVFVAAAIAISHTDHGWPSFYRAADLALQLSFWVGLESHHASPRSILCANEVIDCLENGEGAPSHLLSVTGLDINHLERLVRKLNDQGGDSLYISLINGHNKFVLAGAPHALRGVCIALRSVKASPELDQSRVPFPLRRSVVDVQFLPVSAPYHSSLLSSVELRVTDAIGGLRLRGNDLAIPVYCQANGSLRNLQDYGTHDILLTLIQSVTVERVNWPALCWAMNDATHVLSFGPGAVGSLVQDVLEGTGMNVVNLSGQSMASNLSLLNLSAFALPLGKDWGRKYRPRLRKAAEGSAHASIETKMTRLLGTPHVMVAGMTPTTCSPELVAAIIQADYHVEFACGGYYNRATLETALRQLSRSIPPHRSITCNVIYASPKALSWQIQVLRRLIMEEGLPIDGITVGAGIPSPEVVKEWIDMLAISHIWFKPGSVDAIDRVLTIARQYPTLPVGIQWTGGRAGGHHSCEDFHLPILDCYARIRNCENVILVAGSGFGGAEDTWPYMNGSWSCKLGYAPMPFDGILLGSRMMVAREAKTSFAVKQLIVEAPGVKDDGNDNGAWAKCEHDAVGGVISVTSEMGQPIHVLATRAMRLWKEFDDRFFSIRDPKRLKAALKQHRVEIINRLNNDFARPWFAQTDSSKPTEIEELSYRQVLRRLCQLTYVQHQARWIDSSYLSLVHDFLRLAQGRLGSGSEAELRFLSCNTPIELEASFDAAYGVQGDQILYPEDVSLLINLFRRQGQKPVPFIPRLDADFQTWFKKDSLWQSEDVDAVVDQDAQRVCIIQGPVAVRHSRVCDEPVKDILDGITEAHLKMMLKEAASDNGYTWANQRDEKGNRLPGIETSQEGSLCRYYLVGPTLPSTEAIVEHLVGECAWGYAALSQKKVVFGQNRAPNPIRDAFKPDIGDVIEAKYMDGCLREITLYHSLRRQGDPRAIRAALGLIHLDGNKVSVTLLTRSKGKRPALEFKMELLGGTMGPLILKMHRTDYLDSVRRLYTDLWIGRDLPSPTSVGLNSEFTGDRVTITAEDVNTFLAIVGQAGPARCRAWGTRGPVVPIDYAVVIAWTALTKPILLEALDADPLRLLHQSASTRFVPGIRPLHVGDTVTTSSRITERTITTIGQRVEISAELLREGKPVVRLQTTFIIQRRPEESVSQQQFRCVEEPDMVIRVDSHTKLRVLMSRKWFLLDGPCSDLIGKILIFQLHSQTVFDAAGAPASLQVSGSVSLAPSDTSVVCVSSVGTRIGRVYMEEEGFGANPVMDFLNRHGAPRVQRQPLPRAGWTGDDAASISFTAPAQSEGYAMVSGDTNPIHVCPLFSRFAGLGQPVVHGLHLSATVRRILEWIIGDNERTRFCSWAPSFDGLVRANDRLRMEIQHFAMADGCMVVHVRVLKESTGEQVMHAEAVLEQAQTTYVFTGQGTQERGMGMALYDTNAAARAVWDRAERHFRSQYGISLLHIVRENPTSLTVNFGSRRGRQIRDIYLSMSDSDPSMLPGLTRDSRSYTFNYPSGLLMSTQFAQPALAVMEIAEYAHLQAQGVVQTQAIFAGHSLGEYSSLGACTTIMPFESLLSLILYRGLKMQNTLPRNANGRTDYGMVAADPSRIRSDFTEDRLIELVRLVSQATGVLLEVVNYNVHSRQYVCAGHVRSLWVLSHACDDLSRSTSPNSPQTMSECIAHHIPSSCSVTNETELSRGRATIPLAGVDIPFHSQMLRGHIDGYRQYLRHHLRVSDIKPEELVGRWIPNVTGKPFALDAPYIRLVQGVTQSRPLLELLRRVEENR.

The acetyltransferase (AT) domain stretch occupies residues 17-395 (LYACFGGQGP…LEGTGMNVVN (379 aa)). An enoyl reductase (ER) domain region spans residues 446–692 (TRLLGTPHVM…LIVEAPGVKD (247 aa)). Residues 1009–1509 (GECAWGYAAL…RANDRLRMEI (501 aa)) are dehydratase (DH) domain. The MaoC-like domain maps to 1398–1532 (FLNRHGAPRV…VRVLKESTGE (135 aa)). The interval 1548 to 1900 (YVFTGQGTQE…IRLVQGVTQS (353 aa)) is malonyl/palmitoyl transferase (MT/PT) domain.

Belongs to the fungal fatty acid synthetase subunit beta family. As to quaternary structure, [Alpha(6)beta(6)] hexamers of two multifunctional subunits (alpha and beta).

The catalysed reaction is acetyl-CoA + n malonyl-CoA + 2n NADPH + 4n H(+) = a long-chain-acyl-CoA + n CoA + n CO2 + 2n NADP(+).. It carries out the reaction holo-[ACP] + acetyl-CoA = acetyl-[ACP] + CoA. The enzyme catalyses holo-[ACP] + malonyl-CoA = malonyl-[ACP] + CoA. It catalyses the reaction a (3R)-hydroxyacyl-[ACP] = a (2E)-enoyl-[ACP] + H2O. The catalysed reaction is a 2,3-saturated acyl-[ACP] + NAD(+) = a (2E)-enoyl-[ACP] + NADH + H(+). It carries out the reaction (9Z)-octadecenoyl-[ACP] + H2O = (9Z)-octadecenoate + holo-[ACP] + H(+). It participates in mycotoxin biosynthesis; sterigmatocystin biosynthesis. Its function is as follows. Fatty acid synthase beta subunit; part of the gene cluster that mediates the biosynthesis of sterigmatocystin (ST), a polyketide-derived furanocoumarin which is part of the most toxic and carcinogenic compounds among the known mycotoxins. The first step in the biosynthesis of sterigmatocystin is the production of hexanoate by the fatty acid synthase (FAS) units stcJ and stcK. The polyketide backbone is assembled by the non-reducing polyketide synthase stcA by condensation of the starter hexanoyl-CoA and 7 malonyl-CoA extender units followed by cyclization and release of norsolorinic acid. Norsolorinic acid is the first stable intermediate in the biosynthesis of sterigmatocystin and is converted into averantin (AVN) by the ketoreductase stcE which reduces the hexanoate ketone to an alcohol. Averantin is then oxidized into 5'-hydroxyaverantin (HAVN) by the cytochrome P450 monooxygenase stcF. 5'-hydroxyaverantin is further converted to 5'-oxyaverantin (OAVN) by the 5'-hydroxyaverantin dehydrogenase stcG. The next step is the conversion of OAVN into averufin (AVF) which is catalyzed by a yet to be identified enzyme. The cytochrome P450 monooxygenase stcB and the flavin-binding monooxygenase stcW are both required for the conversion of averufin to 1-hydroxyversicolorone. The esterase stcI probably catalyzes the formation of versiconal hemiacetal acetate from 1-hydroxyversicolorone. The oxydoreductase stcN then probably catalyzes the biosynthetic step from versiconal to versicolorin B (VERB). The next step is performed by the versicolorin B desaturase stcL to produce versicolorin A (VERA). The ketoreductase stcU and the cytochrome P450 monooxygenase stcS are involved in the conversion of versicolorin A to demethylsterigmatocystin. The Baeyer-Villiger oxidas stcQ and the reductase stcR might be involved in the biosynthetic step from versicolorin A to demethylsterigmatocystin. The final step in the biosynthesis of sterigmatocystin is the methylation of demethylsterigmatocystin catalyzed by the methyltransferase stcP. The polypeptide is Fatty acid synthase beta subunit stcK (Emericella nidulans (strain FGSC A4 / ATCC 38163 / CBS 112.46 / NRRL 194 / M139) (Aspergillus nidulans)).